Consider the following 807-residue polypeptide: Putative AC transposase (807 aa).

Disordered stretches follow at residues 42–140 (GLKR…KKCT) and 785–807 (MDED…GSSP). Positions 84-98 (QSVSSSNANGTATDP) are enriched in polar residues. Tandem repeats lie at residues 109-110 (PQ), 111-112 (PQ), 113-114 (PQ), 115-116 (PQ), 117-118 (PE), 119-120 (PQ), 121-122 (PQ), 123-124 (PQ), 125-126 (PE), and 127-128 (PE). The segment at 109–128 (PQPQPQPQPEPQPQPQPEPE) is 10 X 2 AA tandem repeats of P-[QE]. The segment covering 110-125 (QPQPQPQPEPQPQPQP) has biased composition (pro residues).

The chain is Putative AC transposase from Zea mays (Maize).